A 594-amino-acid chain; its full sequence is ATPase family AAA domain-containing protein 3 (594 aa).

The segment at 1–50 is disordered; the sequence is MSWLFGLNKGQQGPPSVPGFPEPPSPPGGSGDGGDKNKPKDKWSNFDPTG. Residues 1–242 lie on the Mitochondrial intermembrane side of the membrane; the sequence is MSWLFGLNKG…FRAFISDWDK (242 aa). Positions 15-27 are enriched in pro residues; that stretch reads PSVPGFPEPPSPP. Basic and acidic residues predominate over residues 33 to 44; it reads GGDKNKPKDKWS. Positions 51–213 form a coiled coil; that stretch reads LERAAKAARE…RENIRLKAAE (163 aa). The chain crosses the membrane as a helical span at residues 243–260; the sequence is VTATVAGLSLLAVGIYTA. Residues 261 to 594 are Mitochondrial matrix-facing; the sequence is KNATGVAGRY…LQPLLEGTPV (334 aa). 348–355 is a binding site for ATP; sequence GPPGTGKT. A compositionally biased stretch (basic and acidic residues) spans 571–581; sequence EGKENAAKESG. The segment at 571–594 is disordered; the sequence is EGKENAAKESGKNPLQPLLEGTPV.

It belongs to the AAA ATPase family.

Its subcellular location is the mitochondrion inner membrane. The protein localises to the mitochondrion matrix. It localises to the mitochondrion nucleoid. Essential for mitochondrial network organization, mitochondrial metabolism and cell growth at organism and cellular level. May play an important role in mitochondrial protein synthesis. May also participate in mitochondrial DNA replication. May bind to mitochondrial DNA D-loops and contribute to nucleoid stability. Required for enhanced channeling of cholesterol for hormone-dependent steroidogenesis. This is ATPase family AAA domain-containing protein 3 (atad3) from Xenopus tropicalis (Western clawed frog).